We begin with the raw amino-acid sequence, 252 residues long: uncharacterized protein (252 aa).

The 235-residue stretch at 13 to 247 (ITLENVNKWY…PKSERTRAFL (235 aa)) folds into the ABC transporter domain. 45–52 (GPSGSGKS) contributes to the ATP binding site.

This sequence belongs to the ABC transporter superfamily.

It localises to the cell inner membrane. Its function is as follows. Probably part of a binding-protein-dependent transport system YdhWXYZ for an amino acid. Probably responsible for energy coupling to the transport system. This is an uncharacterized protein from Escherichia coli (strain K12).